We begin with the raw amino-acid sequence, 318 residues long: MGIAECRDKVLGGGELTKDEARGLMEADVTELAAAADEITRRFNGDGVDVEQLNNIKRDGCSEDCTFCGQSAFYDADKEPHPLPEPEEVVRAALKAKKEEASSYCLVAAWREPTPEGFEKVCTIIQEINTHVGISVECSLGFLTRERAARLKGLGVKRYNHNLETARSKFPEICSTHTYEDRLDTLEIAREAGLELCTGGIIGMGESRGQRIELAMELARIRPEEATVNILVPVQGTPMELQAPLPPGEAERFFALVRFLLPRSVVKISGGREKALDDDGRAILRGGANGIITSGYLTMGGNDSSADMEMIREAGLEA.

In terms of domain architecture, Radical SAM core spans 46–272 (DGVDVEQLNN…RSVVKISGGR (227 aa)). Positions 61, 65, and 68 each coordinate [4Fe-4S] cluster. The [2Fe-2S] cluster site is built by cysteine 105, cysteine 138, cysteine 197, and lysine 267.

Belongs to the radical SAM superfamily. Biotin synthase family. As to quaternary structure, homodimer. [4Fe-4S] cluster serves as cofactor. Requires [2Fe-2S] cluster as cofactor.

The enzyme catalyses (4R,5S)-dethiobiotin + (sulfur carrier)-SH + 2 reduced [2Fe-2S]-[ferredoxin] + 2 S-adenosyl-L-methionine = (sulfur carrier)-H + biotin + 2 5'-deoxyadenosine + 2 L-methionine + 2 oxidized [2Fe-2S]-[ferredoxin]. Its pathway is cofactor biosynthesis; biotin biosynthesis; biotin from 7,8-diaminononanoate: step 2/2. Catalyzes the conversion of dethiobiotin (DTB) to biotin by the insertion of a sulfur atom into dethiobiotin via a radical-based mechanism. This is Biotin synthase from Cenarchaeum symbiosum (strain A).